A 425-amino-acid polypeptide reads, in one-letter code: Serine--tRNA ligase 1 (425 aa).

An L-serine-binding site is contributed by 230–232 (TSE). Residues 261–263 (RRE) and valine 277 each bind ATP. Glutamate 284 contributes to the L-serine binding site. 348–351 (ELTS) is an ATP binding site. Threonine 382 contacts L-serine.

Belongs to the class-II aminoacyl-tRNA synthetase family. Type-1 seryl-tRNA synthetase subfamily. As to quaternary structure, homodimer. The tRNA molecule binds across the dimer.

It is found in the cytoplasm. It carries out the reaction tRNA(Ser) + L-serine + ATP = L-seryl-tRNA(Ser) + AMP + diphosphate + H(+). The catalysed reaction is tRNA(Sec) + L-serine + ATP = L-seryl-tRNA(Sec) + AMP + diphosphate + H(+). Its pathway is aminoacyl-tRNA biosynthesis; selenocysteinyl-tRNA(Sec) biosynthesis; L-seryl-tRNA(Sec) from L-serine and tRNA(Sec): step 1/1. Functionally, catalyzes the attachment of serine to tRNA(Ser). Is also able to aminoacylate tRNA(Sec) with serine, to form the misacylated tRNA L-seryl-tRNA(Sec), which will be further converted into selenocysteinyl-tRNA(Sec). The chain is Serine--tRNA ligase 1 from Streptomyces avermitilis (strain ATCC 31267 / DSM 46492 / JCM 5070 / NBRC 14893 / NCIMB 12804 / NRRL 8165 / MA-4680).